The primary structure comprises 105 residues: MNIYDVLIWMALGMIALLIQYGIWRYLKGKGKDPIPLQICGFLANFFFIFALAWGYSSFSEREYQAIGMGFIFFGGTALIPAIITYRLANHPAKKIRESSDSISA.

3 consecutive transmembrane segments (helical) span residues 3–23 (IYDV…QYGI), 35–55 (IPLQ…LAWG), and 66–86 (AIGM…IITY).

The protein belongs to the PceB family.

The protein localises to the cell membrane. Its function is as follows. May act as a membrane anchor for the tetrachloroethene reductive dehalogenase PceA. This chain is Probable tetrachloroethene reductive dehalogenase membrane anchor protein, found in Desulfitobacterium hafniense (Desulfitobacterium frappieri).